Here is a 201-residue protein sequence, read N- to C-terminus: Small ribosomal subunit protein uS4c (201 aa).

An S4 RNA-binding domain is found at 89–150 (MRLDNIVFRL…RQKSQAIITK (62 aa)).

Belongs to the universal ribosomal protein uS4 family. As to quaternary structure, part of the 30S ribosomal subunit. Contacts protein S5. The interaction surface between S4 and S5 is involved in control of translational fidelity.

It is found in the plastid. It localises to the chloroplast. Its function is as follows. One of the primary rRNA binding proteins, it binds directly to 16S rRNA where it nucleates assembly of the body of the 30S subunit. In terms of biological role, with S5 and S12 plays an important role in translational accuracy. In Funaria hygrometrica (Moss), this protein is Small ribosomal subunit protein uS4c (rps4).